Consider the following 216-residue polypeptide: Probable GTP-binding protein EngB (216 aa).

Residues 24–205 (ATPEIAFVGR…WARLAALAAE (182 aa)) enclose the EngB-type G domain. GTP contacts are provided by residues 32 to 39 (GRSNVGKS), 59 to 63 (GRTRA), 86 to 89 (DLPG), 153 to 156 (TKTD), and 184 to 186 (FSA). Ser39 and Thr61 together coordinate Mg(2+).

The protein belongs to the TRAFAC class TrmE-Era-EngA-EngB-Septin-like GTPase superfamily. EngB GTPase family. It depends on Mg(2+) as a cofactor.

Functionally, necessary for normal cell division and for the maintenance of normal septation. The sequence is that of Probable GTP-binding protein EngB from Anaeromyxobacter dehalogenans (strain 2CP-1 / ATCC BAA-258).